The chain runs to 185 residues: Homeobox expressed in ES cells 1 (185 aa).

Positions 108–167 (GRRPRTAFTQNQIEVLENVFRVNCYPGIDIREDLAQKLNLEEDRIQIWFQNRRAKLKRSH) form a DNA-binding region, homeobox.

The protein belongs to the ANF homeobox family. Can form heterodimers with PROP1 in binding to DNA. Interacts with TLE1.

Its subcellular location is the nucleus. Required for the normal development of the forebrain, eyes and other anterior structures such as the olfactory placodes and pituitary gland. Possible transcriptional repressor. Binds to the palindromic PIII sequence, 5'-AGCTTGAGTCTAATTGAATTAACTGTAC-3'. HESX1 and PROP1 bind as heterodimers on this palindromic site, and, in vitro, HESX1 can antagonize PROP1 activation. In Pan troglodytes (Chimpanzee), this protein is Homeobox expressed in ES cells 1 (HESX1).